The chain runs to 893 residues: Serine/threonine-protein kinase/endoribonuclease IRE1 (893 aa).

An N-terminal signal peptide occupies residues 1–19 (MRSLRRVLLQLVLLAGVAF). Topologically, residues 20–379 (RGVRFDDAAD…NSVTKFSYRW (360 aa)) are lumenal. 4 N-linked (GlcNAc...) asparagine glycosylation sites follow: Asn-105, Asn-158, Asn-259, and Asn-351. Residues 380-397 (LFPTFLMLLIMACLVKLA) traverse the membrane as a helical segment. Residues 398 to 893 (DASKYCRQFV…FSKYFLGSSA (496 aa)) lie on the Cytoplasmic side of the membrane. Positions 451 to 478 (ASDKEGNGTGGSTEAQSNKAHDSTNVEL) are disordered. Positions 491-759 (CVYSKEIGKG…AVYVMHHPFF (269 aa)) constitute a Protein kinase domain. ATP is bound by residues 497 to 505 (IGKGSNGTV) and Lys-519. Asp-625 (proton acceptor) is an active-site residue. The KEN domain maps to 762-890 (PELCLSFLRD…EEAFSKYFLG (129 aa)).

The protein belongs to the protein kinase superfamily. Ser/Thr protein kinase family. Homodimer; disulfide-linked. Dimer formation is driven by hydrophobic interactions within the N-terminal luminal domains and stabilized by disulfide bridges. Autophosphorylated. In terms of tissue distribution, expressed in roots, nodes, internodes, leaf sheaths, leaf blades, young ears and mature ears.

The protein resides in the endoplasmic reticulum membrane. It carries out the reaction L-seryl-[protein] + ATP = O-phospho-L-seryl-[protein] + ADP + H(+). It catalyses the reaction L-threonyl-[protein] + ATP = O-phospho-L-threonyl-[protein] + ADP + H(+). In terms of biological role, involved in endoplasmic reticulum (ER) stress response. Senses unfolded proteins in the lumen of the ER via its N-terminal domain which leads to enzyme auto-activation. The active endoribonuclease domain splices bZIP50 mRNA to generate a new C-terminus, converting it into a potent unfolded-protein response (UPR) transcriptional activator, which then induces transcription of UPR target genes, such as luminal-binding protein (BiP) chaperones. This Oryza sativa subsp. japonica (Rice) protein is Serine/threonine-protein kinase/endoribonuclease IRE1.